A 105-amino-acid chain; its full sequence is Large ribosomal subunit protein uL24 (105 aa).

Belongs to the universal ribosomal protein uL24 family. Part of the 50S ribosomal subunit.

Functionally, one of two assembly initiator proteins, it binds directly to the 5'-end of the 23S rRNA, where it nucleates assembly of the 50S subunit. In terms of biological role, one of the proteins that surrounds the polypeptide exit tunnel on the outside of the subunit. The sequence is that of Large ribosomal subunit protein uL24 from Francisella tularensis subsp. tularensis (strain FSC 198).